The following is a 156-amino-acid chain: ATP synthase subunit b (156 aa).

Residues 11–31 (AIAFVLFVLFCMKYVWPPLMA) form a helical membrane-spanning segment.

It belongs to the ATPase B chain family. As to quaternary structure, F-type ATPases have 2 components, F(1) - the catalytic core - and F(0) - the membrane proton channel. F(1) has five subunits: alpha(3), beta(3), gamma(1), delta(1), epsilon(1). F(0) has three main subunits: a(1), b(2) and c(10-14). The alpha and beta chains form an alternating ring which encloses part of the gamma chain. F(1) is attached to F(0) by a central stalk formed by the gamma and epsilon chains, while a peripheral stalk is formed by the delta and b chains.

The protein localises to the cell inner membrane. Its function is as follows. F(1)F(0) ATP synthase produces ATP from ADP in the presence of a proton or sodium gradient. F-type ATPases consist of two structural domains, F(1) containing the extramembraneous catalytic core and F(0) containing the membrane proton channel, linked together by a central stalk and a peripheral stalk. During catalysis, ATP synthesis in the catalytic domain of F(1) is coupled via a rotary mechanism of the central stalk subunits to proton translocation. Component of the F(0) channel, it forms part of the peripheral stalk, linking F(1) to F(0). This chain is ATP synthase subunit b, found in Shigella boydii serotype 18 (strain CDC 3083-94 / BS512).